The chain runs to 185 residues: ATP-dependent protease subunit HslV (185 aa).

The active site involves T12. Na(+) is bound by residues A168, C171, and T174.

This sequence belongs to the peptidase T1B family. HslV subfamily. As to quaternary structure, a double ring-shaped homohexamer of HslV is capped on each side by a ring-shaped HslU homohexamer. The assembly of the HslU/HslV complex is dependent on binding of ATP.

The protein resides in the cytoplasm. The enzyme catalyses ATP-dependent cleavage of peptide bonds with broad specificity.. Allosterically activated by HslU binding. Its function is as follows. Protease subunit of a proteasome-like degradation complex believed to be a general protein degrading machinery. This is ATP-dependent protease subunit HslV from Ruegeria pomeroyi (strain ATCC 700808 / DSM 15171 / DSS-3) (Silicibacter pomeroyi).